The primary structure comprises 464 residues: Protein FAM90A15 (464 aa).

3 disordered regions span residues 1–42 (MMAR…DPRL), 70–389 (PATL…HDGA), and 415–437 (HSPE…SEAP). Composition is skewed to basic and acidic residues over residues 74–89 (GKKE…KPRV) and 97–114 (NKDK…DPQR). The span at 180–197 (LASLSPLRKASLSSSSSL) shows a compositional bias: low complexity.

It belongs to the FAM90 family.

This is Protein FAM90A15 from Homo sapiens (Human).